A 469-amino-acid polypeptide reads, in one-letter code: Neuraminidase (469 aa).

Over 1 to 9 (MNPNQKIMT) the chain is Intravirion. Residues 10-30 (IGSVSLIIAAVCFLMQIAILV) form a helical membrane-spanning segment. Positions 11 to 33 (GSVSLIIAAVCFLMQIAILVTTV) are involved in apical transport and lipid raft association. Over 31–469 (TTVTLHFKQC…DGANINFMPI (439 aa)) the chain is Virion surface. The tract at residues 36-88 (HFKQCECDSPSNNQVKPCEPIIIERNITEIVYLNNTTIEKETCPKLVEYRNWS) is hypervariable stalk region. N-linked (GlcNAc...) asparagine; by host glycosylation is found at asparagine 61, asparagine 69, asparagine 70, and asparagine 86. A head of neuraminidase region spans residues 91–469 (QCKITGFAPF…DGANINFMPI (379 aa)). 8 cysteine pairs are disulfide-bonded: cysteine 92-cysteine 417, cysteine 124-cysteine 129, cysteine 183-cysteine 230, cysteine 232-cysteine 237, cysteine 278-cysteine 291, cysteine 280-cysteine 289, cysteine 318-cysteine 337, and cysteine 421-cysteine 447. Residue arginine 118 participates in substrate binding. The N-linked (GlcNAc...) asparagine; by host glycan is linked to asparagine 146. Aspartate 151 functions as the Proton donor/acceptor in the catalytic mechanism. Arginine 152 provides a ligand contact to substrate. Residues asparagine 200 and asparagine 234 are each glycosylated (N-linked (GlcNAc...) asparagine; by host). 276–277 (EE) serves as a coordination point for substrate. Arginine 292 serves as a coordination point for substrate. Ca(2+)-binding residues include aspartate 293, glycine 297, and aspartate 324. Residues 323-344 (GDTPRNDDRSSKSNCRNPNNEK) are disordered. Polar residues predominate over residues 334 to 343 (KSNCRNPNNE). Substrate is bound at residue arginine 371. An N-linked (GlcNAc...) asparagine; by host glycan is attached at asparagine 402. Tyrosine 406 serves as the catalytic Nucleophile.

This sequence belongs to the glycosyl hydrolase 34 family. In terms of assembly, homotetramer. The cofactor is Ca(2+). Post-translationally, N-glycosylated.

It is found in the virion membrane. Its subcellular location is the host apical cell membrane. The catalysed reaction is Hydrolysis of alpha-(2-&gt;3)-, alpha-(2-&gt;6)-, alpha-(2-&gt;8)- glycosidic linkages of terminal sialic acid residues in oligosaccharides, glycoproteins, glycolipids, colominic acid and synthetic substrates.. With respect to regulation, inhibited by the neuraminidase inhibitors zanamivir (Relenza) and oseltamivir (Tamiflu). These drugs interfere with the release of progeny virus from infected cells and are effective against all influenza strains. Resistance to neuraminidase inhibitors is quite rare. Functionally, catalyzes the removal of terminal sialic acid residues from viral and cellular glycoconjugates. Cleaves off the terminal sialic acids on the glycosylated HA during virus budding to facilitate virus release. Additionally helps virus spread through the circulation by further removing sialic acids from the cell surface. These cleavages prevent self-aggregation and ensure the efficient spread of the progeny virus from cell to cell. Otherwise, infection would be limited to one round of replication. Described as a receptor-destroying enzyme because it cleaves a terminal sialic acid from the cellular receptors. May facilitate viral invasion of the upper airways by cleaving the sialic acid moieties on the mucin of the airway epithelial cells. Likely to plays a role in the budding process through its association with lipid rafts during intracellular transport. May additionally display a raft-association independent effect on budding. Plays a role in the determination of host range restriction on replication and virulence. Sialidase activity in late endosome/lysosome traffic seems to enhance virus replication. This is Neuraminidase from Influenza A virus (strain A/Swine/Hong Kong/3/1976 H3N2).